A 24-amino-acid chain; its full sequence is FLPILASLAATLGPKLLCLITKKC.

Cys-18 and Cys-24 are joined by a disulfide.

Expressed by the skin glands.

It localises to the secreted. In terms of biological role, antibacterial activity against Gram-positive bacterium S.aureus. Weak antifungal activity against C.albicans. In Rana boylii (Foothill yellow-legged frog), this protein is Brevinin-1BYc.